Here is a 273-residue protein sequence, read N- to C-terminus: Peroxiredoxin-4 (273 aa).

Residues 1–40 form the signal peptide; sequence METWSKLLDGTTPSRRWRKLVLLLPPLLLFLLQTEALQGL. Residues 81-239 form the Thioredoxin domain; the sequence is AKISKPAPYW…TLRLVQAFQY (159 aa). Residue cysteine 126 is the Cysteine sulfenic acid (-SOH) intermediate of the active site.

The protein belongs to the peroxiredoxin family. AhpC/Prx1 subfamily. In terms of assembly, homodimer; disulfide-linked, upon oxidation. 5 homodimers assemble to form a ring-like decamer. Post-translationally, the enzyme can be inactivated by further oxidation of the cysteine sulfenic acid (C(P)-SOH) to sulphinic acid (C(P)-SO2H) and sulphonic acid (C(P)-SO3H) instead of its condensation to a disulfide bond.

It is found in the cytoplasm. Its subcellular location is the endoplasmic reticulum. The protein localises to the secreted. It catalyses the reaction a hydroperoxide + [thioredoxin]-dithiol = an alcohol + [thioredoxin]-disulfide + H2O. Functionally, thiol-specific peroxidase that catalyzes the reduction of hydrogen peroxide and organic hydroperoxides to water and alcohols, respectively. Plays a role in cell protection against oxidative stress by detoxifying peroxides and as sensor of hydrogen peroxide-mediated signaling events. Regulates the activation of NF-kappa-B in the cytosol by a modulation of I-kappa-B-alpha phosphorylation. This Rattus norvegicus (Rat) protein is Peroxiredoxin-4 (Prdx4).